The chain runs to 196 residues: Thymidine kinase (196 aa).

Residue 17–24 coordinates ATP; the sequence is GPMFAGKT. Residue E92 is the Proton acceptor of the active site. F121 contacts substrate. Residues C146 and C149 each contribute to the Zn(2+) site. 166-170 is a binding site for substrate; it reads LILAG. The Zn(2+) site is built by C179 and C182.

This sequence belongs to the thymidine kinase family.

The enzyme catalyses thymidine + ATP = dTMP + ADP + H(+). Functionally, phosphorylates thymidine. ASFV replicates in the cytoplasm of infected cells and contains genes encoding a number of enzymes needed for DNA synthesis, including thymidine kinase. Important for growth in swine macrophages in vitro and is a virus virulence factor in swine. The sequence is that of Thymidine kinase from African swine fever virus (strain Badajoz 1971 Vero-adapted) (Ba71V).